Consider the following 205-residue polypeptide: HTH-type transcriptional regulator LuxR (205 aa).

Residues 15-75 (LKRKQQLMEI…EVLNHVVRQF (61 aa)) form the HTH tetR-type domain. The segment at residues 39–58 (HADIAEIAQVSVATVFNYFP) is a DNA-binding region (H-T-H motif).

Its function is as follows. Regulatory protein of bacterial bioluminescence. It probably binds the autoinducer molecule and potentiates the transcription of the bioluminescence operon. The sequence is that of HTH-type transcriptional regulator LuxR (luxR) from Vibrio harveyi (Beneckea harveyi).